The chain runs to 404 residues: CCA-adding enzyme (404 aa).

2 residues coordinate ATP: Gly-27 and Arg-30. Gly-27 and Arg-30 together coordinate CTP. The Mg(2+) site is built by Asp-40 and Asp-42. ATP contacts are provided by Arg-111, Asp-154, Arg-157, Arg-160, and Arg-163. The CTP site is built by Arg-111, Asp-154, Arg-157, Arg-160, and Arg-163.

This sequence belongs to the tRNA nucleotidyltransferase/poly(A) polymerase family. Bacterial CCA-adding enzyme type 3 subfamily. As to quaternary structure, homodimer. Mg(2+) is required as a cofactor.

It catalyses the reaction a tRNA precursor + 2 CTP + ATP = a tRNA with a 3' CCA end + 3 diphosphate. The enzyme catalyses a tRNA with a 3' CCA end + 2 CTP + ATP = a tRNA with a 3' CCACCA end + 3 diphosphate. In terms of biological role, catalyzes the addition and repair of the essential 3'-terminal CCA sequence in tRNAs without using a nucleic acid template. Adds these three nucleotides in the order of C, C, and A to the tRNA nucleotide-73, using CTP and ATP as substrates and producing inorganic pyrophosphate. tRNA 3'-terminal CCA addition is required both for tRNA processing and repair. Also involved in tRNA surveillance by mediating tandem CCA addition to generate a CCACCA at the 3' terminus of unstable tRNAs. While stable tRNAs receive only 3'-terminal CCA, unstable tRNAs are marked with CCACCA and rapidly degraded. This chain is CCA-adding enzyme, found in Geobacillus thermodenitrificans (strain NG80-2).